The chain runs to 335 residues: Biotin synthase (335 aa).

In terms of domain architecture, Radical SAM core spans 39–267; sequence TKIQVCKLIS…ASDVRLSAGR (229 aa). Cys-54, Cys-58, and Cys-61 together coordinate [4Fe-4S] cluster. Residues Cys-98, Cys-130, Cys-190, and Arg-262 each contribute to the [2Fe-2S] cluster site.

It belongs to the radical SAM superfamily. Biotin synthase family. Homodimer. The cofactor is [4Fe-4S] cluster. [2Fe-2S] cluster serves as cofactor.

The catalysed reaction is (4R,5S)-dethiobiotin + (sulfur carrier)-SH + 2 reduced [2Fe-2S]-[ferredoxin] + 2 S-adenosyl-L-methionine = (sulfur carrier)-H + biotin + 2 5'-deoxyadenosine + 2 L-methionine + 2 oxidized [2Fe-2S]-[ferredoxin]. The protein operates within cofactor biosynthesis; biotin biosynthesis; biotin from 7,8-diaminononanoate: step 2/2. Functionally, catalyzes the conversion of dethiobiotin (DTB) to biotin by the insertion of a sulfur atom into dethiobiotin via a radical-based mechanism. The sequence is that of Biotin synthase from Nostoc punctiforme (strain ATCC 29133 / PCC 73102).